The primary structure comprises 310 residues: DNA repair nuclease APEX1 (310 aa).

The interval 1 to 51 (MPKRAKKNEEGVDGEADNGTAAAKKEKKGKEPEAPILYEDPPEKLTSKDGR) is disordered. The span at 41–51 (PPEKLTSKDGR) shows a compositional bias: basic and acidic residues. Mg(2+)-binding residues include Asp63 and Glu89. Residue Tyr164 is part of the active site. Residues Asp203, Asn205, and Asp300 each coordinate Mg(2+). Asp203 functions as the Proton donor/acceptor in the catalytic mechanism.

This sequence belongs to the DNA repair enzymes AP/ExoA family. It depends on Mg(2+) as a cofactor. The cofactor is Mn(2+).

The protein resides in the nucleus. It is found in the nucleolus. Its subcellular location is the nucleus speckle. It localises to the endoplasmic reticulum. The protein localises to the cytoplasm. The protein resides in the mitochondrion. It carries out the reaction Exonucleolytic cleavage in the 3'- to 5'-direction to yield nucleoside 5'-phosphates.. In terms of biological role, functions as an apurinic/apyrimidinic (AP) endodeoxyribonuclease in the DNA base excision repair (BER) pathway of DNA lesions induced by oxidative and alkylating agents. Initiates repair of AP sites in DNA by catalyzing hydrolytic incision of the phosphodiester backbone immediately adjacent to the damage, generating a single-strand break with 5'-deoxyribose phosphate and 3'-hydroxyl ends. Has 3'-5' exoribonuclease activity on mismatched deoxyribonucleotides at the 3' termini of nicked or gapped DNA molecules during short-patch BER. May also play a role in the epigenetic regulation of gene expression by participating in DNA demethylation. Required for passage through the mid-blastula transition MBT. May also act as an endoribonuclease involved in the control of single-stranded RNA metabolism. Has no redox activity. Binds DNA and RNA. The polypeptide is DNA repair nuclease APEX1 (apex1) (Danio rerio (Zebrafish)).